The primary structure comprises 149 residues: 17 kDa major membrane protein (149 aa).

A signal peptide spans 1-19; sequence MKKIIKLSLLSLSIAGLAS. The N-palmitoyl cysteine moiety is linked to residue Cys-20. Cys-20 carries S-diacylglycerol cysteine lipidation.

The protein resides in the cell outer membrane. The sequence is that of 17 kDa major membrane protein from Francisella tularensis subsp. holarctica (strain LVS).